A 279-amino-acid chain; its full sequence is Calcium-activated potassium channel subunit beta-3 (279 aa).

Residues 1-60 (MDFSPSSELGFHFVAFILLTRHRTAFPASGKKRETDYSDGDPLDVHKRLPSSAGEDRAVM) are Cytoplasmic-facing. The chain crosses the membrane as a helical span at residues 61-81 (LGFAMMGFSVLMFFLLGTTIL). Topologically, residues 82 to 207 (KPFMLSIQRE…DVILIKKYDQ (126 aa)) are extracellular. N131 carries an N-linked (GlcNAc...) asparagine glycan. Residues 208-228 (MAIFHCLFWPSLTLLGGALIV) traverse the membrane as a helical segment. The Cytoplasmic portion of the chain corresponds to 229-279 (GMVRLTQHLSLLCEKYSTVVRDEVGGKVPYIEQHQFKLCIMRRSKGRAEKS).

Belongs to the KCNMB (TC 8.A.14.1) family. KCNMB3 subfamily. As to quaternary structure, interacts with KCNMA1 tetramer. There are probably 4 molecules of KCMNB3 per KCNMA1 tetramer. N-glycosylated. In terms of processing, the extracellular domain contains disulfide bond essential for the gating mechanism. As to expression, isoform 1, isoform 3 and isoform 4 are widely expressed. Isoform 2 is expressed placenta, pancreas, kidney and heart. Isoform 1 and isoform 3 are highly expressed in pancreas and testis.

The protein resides in the membrane. In terms of biological role, regulatory subunit of the calcium activated potassium KCNMA1 (maxiK) channel. Modulates the calcium sensitivity and gating kinetics of KCNMA1, thereby contributing to KCNMA1 channel diversity. Alters the functional properties of the current expressed by the KCNMA1 channel. Isoform 2, isoform 3 and isoform 4 partially inactivate the current of KCNBMA. Isoform 4 induces a fast and incomplete inactivation of KCNMA1 channel that is detectable only at large depolarizations. In contrast, isoform 1 does not induce detectable inactivation of KCNMA1. Two or more subunits of KCNMB3 are required to block the KCNMA1 tetramer. This chain is Calcium-activated potassium channel subunit beta-3 (KCNMB3), found in Homo sapiens (Human).